A 689-amino-acid chain; its full sequence is Acetyl-coenzyme A synthetase 2-like, mitochondrial (689 aa).

The transit peptide at 1 to 37 (MAARTLGRGVGRLLGSLRGLSGQPARPPCGVSAPRRA) directs the protein to the mitochondrion. Residues 17–46 (LRGLSGQPARPPCGVSAPRRAASGPSGSAP) form a disordered region. Over residues 32 to 46 (SAPRRAASGPSGSAP) the composition is skewed to low complexity. CoA is bound by residues 224–227 (RGGR) and Thr-341. The residue at position 396 (Lys-396) is an N6-acetyllysine. Residues 417–419 (GEP), 441–446 (DTWWQT), Asp-533, and Arg-548 contribute to the ATP site. Ser-556 contributes to the CoA binding site. Arg-559 is an ATP binding site. Lys-642 bears the N6-acetyllysine mark.

This sequence belongs to the ATP-dependent AMP-binding enzyme family. Interacts with SIRT3. Post-translationally, reversibly acetylated on Lys-642. The acetyl-CoA synthase activity is inhibited by acetylation and activated by deacetylation mediated by the deacetylase SIRT3.

The protein localises to the mitochondrion matrix. The enzyme catalyses acetate + ATP + CoA = acetyl-CoA + AMP + diphosphate. It carries out the reaction propanoate + ATP + CoA = propanoyl-CoA + AMP + diphosphate. Its activity is regulated as follows. Inhibited by acetylation at Lys-642 and activated by deacetylation mediated by the deacetylase SIRT3. In terms of biological role, catalyzes the synthesis of acetyl-CoA from short-chain fatty acids. Acetate is the preferred substrate. Can also utilize propionate with a much lower affinity. Provides acetyl-CoA that is utilized mainly for oxidation under ketogenic conditions. Involved in thermogenesis under ketogenic conditions, using acetate as a vital fuel when carbohydrate availability is insufficient. The sequence is that of Acetyl-coenzyme A synthetase 2-like, mitochondrial (ACSS1) from Homo sapiens (Human).